A 362-amino-acid chain; its full sequence is Mannose-1-phosphate guanyltransferase (362 aa).

Belongs to the transferase hexapeptide repeat family.

It localises to the cytoplasm. It carries out the reaction alpha-D-mannose 1-phosphate + GTP + H(+) = GDP-alpha-D-mannose + diphosphate. It functions in the pathway nucleotide-sugar biosynthesis; GDP-alpha-D-mannose biosynthesis; GDP-alpha-D-mannose from alpha-D-mannose 1-phosphate (GTP route): step 1/1. Involved in cell wall synthesis where it is required for glycosylation. Involved in cell cycle progression through cell-size checkpoint. The chain is Mannose-1-phosphate guanyltransferase (MPG1) from Debaryomyces hansenii (strain ATCC 36239 / CBS 767 / BCRC 21394 / JCM 1990 / NBRC 0083 / IGC 2968) (Yeast).